The following is a 260-amino-acid chain: Methyl-coenzyme M reductase subunit gamma (260 aa).

A coenzyme M-binding site is contributed by R123.

This sequence belongs to the methyl-coenzyme M reductase gamma subunit family. MCR is a hexamer of two alpha, two beta, and two gamma chains, forming a dimer of heterotrimers. Requires coenzyme F430 as cofactor.

It localises to the cytoplasm. It carries out the reaction coenzyme B + methyl-coenzyme M = methane + coenzyme M-coenzyme B heterodisulfide. It participates in one-carbon metabolism; methyl-coenzyme M reduction; methane from methyl-coenzyme M: step 1/1. Its function is as follows. Component of the methyl-coenzyme M reductase (MCR) I that catalyzes the reductive cleavage of methyl-coenzyme M (CoM-S-CH3 or 2-(methylthio)ethanesulfonate) using coenzyme B (CoB or 7-mercaptoheptanoylthreonine phosphate) as reductant which results in the production of methane and the mixed heterodisulfide of CoB and CoM (CoM-S-S-CoB). This is the final step in methanogenesis. The sequence is that of Methyl-coenzyme M reductase subunit gamma (mcrG) from Methanococcus vannielii.